A 646-amino-acid chain; its full sequence is DEAD-box ATP-dependent RNA helicase 52 (646 aa).

2 disordered regions span residues Met1–Gly64 and Gly76–Asn117. Ser2 bears the N-acetylserine mark. Gly residues-rich tracts occupy residues Asp54–Gly64 and Gly76–Gly87. The Q motif signature appears at Asn146 to Arg174. The Helicase ATP-binding domain occupies Ile177–Leu361. Residue Ala190–Thr197 coordinates ATP. The DEAD box signature appears at Asp305–Asp308. The region spanning His388 to Ala539 is the Helicase C-terminal domain.

This sequence belongs to the DEAD box helicase family. DDX3/DED1 subfamily.

The catalysed reaction is ATP + H2O = ADP + phosphate + H(+). This Arabidopsis thaliana (Mouse-ear cress) protein is DEAD-box ATP-dependent RNA helicase 52 (RH52).